We begin with the raw amino-acid sequence, 274 residues long: Large ribosomal subunit protein uL2cz/uL2cy (274 aa).

The segment at 225–274 is disordered; sequence NPVDHPHGGGEGRAPIGRKKPTTPWGYPALGRRSRKRKKYSDSFILRRRK.

It belongs to the universal ribosomal protein uL2 family. Part of the 50S ribosomal subunit.

The protein resides in the plastid. It localises to the chloroplast. The sequence is that of Large ribosomal subunit protein uL2cz/uL2cy (rpl2-A) from Dioscorea elephantipes (Elephant's foot yam).